A 102-amino-acid polypeptide reads, in one-letter code: MAKQKIRIRLKAYDHRVLDQSAEKIVETAKRSGANVSGPIPLPTEKSVYTILRAVHKYKDSREQFEMRTHKRLIDIVNPTPQTVDALMRLDLPSGVDIEIKL.

This sequence belongs to the universal ribosomal protein uS10 family. In terms of assembly, part of the 30S ribosomal subunit.

In terms of biological role, involved in the binding of tRNA to the ribosomes. The protein is Small ribosomal subunit protein uS10 of Halalkalibacterium halodurans (strain ATCC BAA-125 / DSM 18197 / FERM 7344 / JCM 9153 / C-125) (Bacillus halodurans).